Here is a 521-residue protein sequence, read N- to C-terminus: Bifunctional purine biosynthesis protein PurH (521 aa).

Residues 1 to 145 (MIKQALISVS…KNHRDVTVVV (145 aa)) form the MGS-like domain.

It belongs to the PurH family.

It catalyses the reaction (6R)-10-formyltetrahydrofolate + 5-amino-1-(5-phospho-beta-D-ribosyl)imidazole-4-carboxamide = 5-formamido-1-(5-phospho-D-ribosyl)imidazole-4-carboxamide + (6S)-5,6,7,8-tetrahydrofolate. The enzyme catalyses IMP + H2O = 5-formamido-1-(5-phospho-D-ribosyl)imidazole-4-carboxamide. Its pathway is purine metabolism; IMP biosynthesis via de novo pathway; 5-formamido-1-(5-phospho-D-ribosyl)imidazole-4-carboxamide from 5-amino-1-(5-phospho-D-ribosyl)imidazole-4-carboxamide (10-formyl THF route): step 1/1. The protein operates within purine metabolism; IMP biosynthesis via de novo pathway; IMP from 5-formamido-1-(5-phospho-D-ribosyl)imidazole-4-carboxamide: step 1/1. The polypeptide is Bifunctional purine biosynthesis protein PurH (Burkholderia pseudomallei (strain 1710b)).